Here is a 718-residue protein sequence, read N- to C-terminus: MKIRISLNILAKFLDSFAHLLFLKNKEIYTPRKEQAACVEVLERYFQANPENGRFLMNCKMRFGKCFTLYSYAQKNNINKILILTFVPAVEESLKDDLNHIEKNYKFYTDDDLQKSNFDLKNQNEPYVVFLSLQNVLGKQRIDGAKTDFDKERISKLQEIDFDLIVFDEYHYGANKKRTQIKVEKVNKKIDNPEQQDNQDDAEEELASTFKLKDIKSKFQFSYKQLVCLSGTPFSSLRNNEFSSKDQVFTYSYFDEQKAKSAENHPLKLGQYGIFPEMNIYCFELAEIFTAQEQEIFITPGKGKNKLPEISFRKLFQTENVSKESSKPVYRFVNENLVEKLIDSLIDKRKGFSHTPLSWENIDKHKHSLLILPTRVACFALANLLKNHWYFENNDFQIINMSESQFGNGKKALIELNKHLDEAKKTNKNTLTITVAKLTIGITVKEWSTVFFLKDLKGAESYFQTIFRIQTPYIKNCKNLKEICYVYDFNMYRCLEVTNEYSKQTQTDPKFSASWFQNLDKFLPIYLVRGDEIQKTDPEILQKYEYFIMDKRAFSTRWMDESNIIDIDVLCNVGQDEDAQKILKKILAHKKFKSSKKKREFEDVHLEKSPKSEAFSEGVRSGKDYAAEQGNVLEELENFWNFNQALEQKAKAEFQQKNFDDNEWNNYKKGFNFGVNKHFEDKVSIKKIVQNKIKDFKKRKGRTTSTFKKWKWLYFWWE.

Functionally, corresponds to the C-terminus of a putative G subtype type II restriction/methylase subunit. The polypeptide is Putative type II restriction enzyme and methyltransferase RM.MpnORF110P C-terminus (Mycoplasma pneumoniae (strain ATCC 29342 / M129 / Subtype 1) (Mycoplasmoides pneumoniae)).